A 123-amino-acid polypeptide reads, in one-letter code: MLQNSELLQEYLPIAIFFGIALLVSGLIMILPNLLSTKKYNKDKLEPYECGFEPFSDARSKFDIRFYLVAILFIIFDLEIAFLVPWAISLNMIGKIGFFSMIFFLFVLTIGFIYEWKKGALDW.

3 consecutive transmembrane segments (helical) span residues 11-31, 68-88, and 93-113; these read YLPI…IMIL, LVAI…PWAI, and IGKI…IGFI.

This sequence belongs to the complex I subunit 3 family. NDH-1 is composed of 14 different subunits. Subunits NuoA, H, J, K, L, M, N constitute the membrane sector of the complex.

It is found in the cell inner membrane. The enzyme catalyses a quinone + NADH + 5 H(+)(in) = a quinol + NAD(+) + 4 H(+)(out). In terms of biological role, NDH-1 shuttles electrons from NADH, via FMN and iron-sulfur (Fe-S) centers, to quinones in the respiratory chain. The immediate electron acceptor for the enzyme in this species is believed to be ubiquinone. Couples the redox reaction to proton translocation (for every two electrons transferred, four hydrogen ions are translocated across the cytoplasmic membrane), and thus conserves the redox energy in a proton gradient. The protein is NADH-quinone oxidoreductase subunit A of Rickettsia felis (strain ATCC VR-1525 / URRWXCal2) (Rickettsia azadi).